A 342-amino-acid chain; its full sequence is Protein-ribulosamine 3-kinase, chloroplastic (342 aa).

The N-terminal 46 residues, 1–46, are a transit peptide targeting the chloroplast; it reads MANVALLSAASPSTSSAAPRLRHVARRRPSRRSACPRSAASRLSIM. An ATP-binding site is contributed by 141–143; the sequence is EFI. Catalysis depends on D246, which acts as the Proton acceptor.

The protein belongs to the fructosamine kinase family.

Its subcellular location is the plastid. It is found in the chloroplast. The enzyme catalyses N(6)-D-ribulosyl-L-lysyl-[protein] + ATP = N(6)-(3-O-phospho-D-ribulosyl)-L-lysyl-[protein] + ADP + H(+). The catalysed reaction is N(6)-(D-erythrulosyl)-L-lysyl-[protein] + ATP = N(6)-(3-O-phospho-D-erythrulosyl)-L-lysyl-[protein] + ADP + H(+). In terms of biological role, initiates a process leading to the deglycation of proteins. Phosphorylates low-molecular-mass and protein-bound erythrulosamines and ribulosamines, but not fructosamines or psicosamines, on the third carbon of the sugar moiety. Protein-bound erythrulosamine 3-phosphates and ribulosamine 3-phosphates are unstable and decompose under physiological conditions. This Oryza sativa subsp. japonica (Rice) protein is Protein-ribulosamine 3-kinase, chloroplastic.